Reading from the N-terminus, the 205-residue chain is Small ribosomal subunit protein uS4 (205 aa).

The interval Asn-18–Ser-46 is disordered. The S4 RNA-binding domain maps to Arg-94–Ser-157.

Belongs to the universal ribosomal protein uS4 family. Part of the 30S ribosomal subunit. Contacts protein S5. The interaction surface between S4 and S5 is involved in control of translational fidelity.

In terms of biological role, one of the primary rRNA binding proteins, it binds directly to 16S rRNA where it nucleates assembly of the body of the 30S subunit. With S5 and S12 plays an important role in translational accuracy. The protein is Small ribosomal subunit protein uS4 of Rhodopseudomonas palustris (strain HaA2).